Consider the following 226-residue polypeptide: Large ribosomal subunit protein uL1 (226 aa).

The protein belongs to the universal ribosomal protein uL1 family. As to quaternary structure, part of the 50S ribosomal subunit.

In terms of biological role, binds directly to 23S rRNA. The L1 stalk is quite mobile in the ribosome, and is involved in E site tRNA release. Its function is as follows. Protein L1 is also a translational repressor protein, it controls the translation of the L11 operon by binding to its mRNA. This Treponema denticola (strain ATCC 35405 / DSM 14222 / CIP 103919 / JCM 8153 / KCTC 15104) protein is Large ribosomal subunit protein uL1.